The following is a 147-amino-acid chain: D-aminoacyl-tRNA deacylase (147 aa).

The short motif at 136–137 (GP) is the Gly-cisPro motif, important for rejection of L-amino acids element.

The protein belongs to the DTD family. As to quaternary structure, homodimer.

The protein localises to the cytoplasm. It carries out the reaction glycyl-tRNA(Ala) + H2O = tRNA(Ala) + glycine + H(+). It catalyses the reaction a D-aminoacyl-tRNA + H2O = a tRNA + a D-alpha-amino acid + H(+). An aminoacyl-tRNA editing enzyme that deacylates mischarged D-aminoacyl-tRNAs. Also deacylates mischarged glycyl-tRNA(Ala), protecting cells against glycine mischarging by AlaRS. Acts via tRNA-based rather than protein-based catalysis; rejects L-amino acids rather than detecting D-amino acids in the active site. By recycling D-aminoacyl-tRNA to D-amino acids and free tRNA molecules, this enzyme counteracts the toxicity associated with the formation of D-aminoacyl-tRNA entities in vivo and helps enforce protein L-homochirality. The polypeptide is D-aminoacyl-tRNA deacylase (Streptococcus sanguinis (strain SK36)).